Reading from the N-terminus, the 153-residue chain is Bacteriohemerythrin (153 aa).

His21, His57, Glu61, His76, His80, His115, and Asp120 together coordinate Fe cation.

The protein belongs to the hemerythrin family. As to quaternary structure, monomer.

In terms of biological role, oxygen-binding protein. May be involved in a storage mechanism or for delivery to oxygen-requiring enzymes. The oxygen-binding site contains two iron atoms. This chain is Bacteriohemerythrin, found in Pseudomonas paraeruginosa (strain DSM 24068 / PA7) (Pseudomonas aeruginosa (strain PA7)).